The primary structure comprises 1250 residues: Immunoglobulin superfamily DCC subclass member 4 (1250 aa).

Residues 1-24 (MARGDAGRGRGLLALTFCLLAARG) form the signal peptide. Residues 25-957 (ELLLPQETTV…SDSLDMHSVT (933 aa)) lie on the Extracellular side of the membrane. Ig-like C2-type domains lie at 29–137 (PQET…TAVV), 143–229 (ADFS…ALLS), 242–330 (QDVV…AELR), and 335–421 (PAIT…ASLA). An intrachain disulfide couples Cys-57 to Cys-121. N-linked (GlcNAc...) asparagine glycosylation is found at Asn-90, Asn-102, and Asn-157. Cys-164 and Cys-212 are disulfide-bonded. An N-linked (GlcNAc...) asparagine glycan is attached at Asn-252. 2 disulfides stabilise this stretch: Cys-265–Cys-312 and Cys-356–Cys-405. 5 consecutive Fibronectin type-III domains span residues 431 to 525 (APTR…TLDD), 527 to 623 (PSAA…TPSM), 632 to 741 (APAE…APAP), 752 to 845 (PPAH…TLPD), and 850 to 945 (PPSD…TLQE). An N-linked (GlcNAc...) asparagine glycan is attached at Asn-582. Residues 958 to 978 (GIIVGVCLGLLCLLACMCAGL) traverse the membrane as a helical segment. Over 979 to 1250 (RRSPHRESLP…LPRSPVSSSA (272 aa)) the chain is Cytoplasmic. Thr-995 carries the post-translational modification Phosphothreonine. Disordered stretches follow at residues 1140 to 1175 (SASN…DPGQ) and 1215 to 1250 (PGEV…SSSA).

The protein belongs to the immunoglobulin superfamily. DCC family.

The protein localises to the cell membrane. The chain is Immunoglobulin superfamily DCC subclass member 4 (IGDCC4) from Homo sapiens (Human).